Consider the following 1388-residue polypeptide: ABC transporter G family member 52 (1388 aa).

Residues 1–24 form a disordered region; it reads MDDAGEICSFSRSSSSAREDDEED. The ABC transporter 1 domain maps to 135-406; sequence TNALCITKKI…FKSVGFKCPE (272 aa). 168–175 serves as a coordination point for ATP; it reads GPPGSGKT. One can recognise an ABC transmembrane type-2 1 domain in the interval 484–697; that stretch reads ELLKANIYRE…ALNALAVNEF (214 aa). Transmembrane regions (helical) follow at residues 503 to 523, 541 to 561, 590 to 610, 621 to 641, 646 to 666, 675 to 695, and 732 to 752; these read LYIFKAIQLKLVAINAMTVFI, ALFYGMMMIVYSALAEMGPAI, IPISFLNTTVWVFLTYYVIGF, FLVLFVLCEVIYALFRFIVAL, VIASNMGPFCILIFMLSCGFI, WWIWLYWISPLMYALNALAVN, and ISIGALLGYVLLFNVLYTICL. Residues 791–1043 enclose the ABC transporter 2 domain; the sequence is ITFEDIRYSV…ELIKYFEAIQ (253 aa). Position 836-843 (836-843) interacts with ATP; that stretch reads GVSGAGKT. Residues 1116–1330 form the ABC transmembrane type-2 2 domain; it reads TQWLACLWKQ…TLNGLLTSQF (215 aa). The next 7 membrane-spanning stretches (helical) occupy residues 1136-1156, 1167-1183, 1223-1243, 1250-1270, 1280-1300, 1305-1325, and 1357-1377; these read IVVRYLFTIVVALLFGTMFWG, LFSIMGAMYSACMAMGV, FPYIFLQTIIYCVLVYAMVGY, FLWYLFFMFFTLSYFTFYGMM, MSAVVSTAFYNIWNLFSGFLI, IPVWWRWYYWMCPVAWTLNGL, and LLWVAAVAVVSFAILFAFLFG.

This sequence belongs to the ABC transporter superfamily. ABCG family. PDR (TC 3.A.1.205) subfamily.

Its subcellular location is the membrane. Functionally, may be a general defense protein. The sequence is that of ABC transporter G family member 52 from Oryza sativa subsp. japonica (Rice).